A 345-amino-acid chain; its full sequence is NADH-ubiquinone oxidoreductase chain 2 (345 aa).

A run of 9 helical transmembrane segments spans residues 1-21, 25-45, 60-80, 113-133, 148-168, 191-211, 239-259, 274-294, and 324-344; these read MNPIINFILLFSMMAGTILAM, HWVYAWLGLELNTLAIIPIIS, FLIQAISSALFLLSGITNAYL, FWLPEVLQGVPILTALIIATW, LIPTPITLTMGLLSTIIGGLG, VIIITIAPNLTLLNLTLYMIF, IITSLFLLSLLSLGGLPPMSG, HLTPLALSMALMALLSLMFYL, and SSLSMLTPPSLLILPIMPLLI.

It belongs to the complex I subunit 2 family.

It is found in the mitochondrion inner membrane. The catalysed reaction is a ubiquinone + NADH + 5 H(+)(in) = a ubiquinol + NAD(+) + 4 H(+)(out). In terms of biological role, core subunit of the mitochondrial membrane respiratory chain NADH dehydrogenase (Complex I) that is believed to belong to the minimal assembly required for catalysis. Complex I functions in the transfer of electrons from NADH to the respiratory chain. The immediate electron acceptor for the enzyme is believed to be ubiquinone. The chain is NADH-ubiquinone oxidoreductase chain 2 (MT-ND2) from Varanus baritji (Black-spotted ridge-tailed monitor).